The following is a 454-amino-acid chain: Phenylalanine--tRNA ligase, mitochondrial (454 aa).

Residues Ser141 to Gln144, Arg163, Val170 to Tyr172, Gln177 to Glu179, Glu266, and Phe291 each bind substrate. Positions Lys327–Leu347 are disordered. Low complexity predominate over residues Ser328 to Leu347. The FDX-ACB domain maps to Ser361–Arg454.

The protein belongs to the class-II aminoacyl-tRNA synthetase family. Monomer.

The protein localises to the mitochondrion matrix. The enzyme catalyses tRNA(Phe) + L-phenylalanine + ATP = L-phenylalanyl-tRNA(Phe) + AMP + diphosphate + H(+). Functionally, is responsible for the charging of tRNA(Phe) with phenylalanine in mitochondrial translation. The polypeptide is Phenylalanine--tRNA ligase, mitochondrial (mpheS) (Dictyostelium discoideum (Social amoeba)).